Here is a 598-residue protein sequence, read N- to C-terminus: Dihydroxy-acid dehydratase astD, mitochondrial (598 aa).

Residues 1 to 111 (MFASRIRSRA…HRAGLVPMRF (111 aa)) constitute a mitochondrion transit peptide. The disordered stretch occupies residues 23 to 50 (RLPASTTGRRYKSDETLNRVSSKITQPK). Residues 40–50 (NRVSSKITQPK) are compositionally biased toward polar residues. A [2Fe-2S] cluster-binding site is contributed by C86. Residue D118 coordinates Mg(2+). C159 is a [2Fe-2S] cluster binding site. Position 160 (D160) interacts with Mg(2+). C232 is a binding site for [2Fe-2S] cluster. A Mg(2+)-binding site is contributed by E485. S511 functions as the Proton acceptor in the catalytic mechanism.

Belongs to the IlvD/Edd family. It depends on [2Fe-2S] cluster as a cofactor. Requires Mg(2+) as cofactor.

The protein localises to the mitochondrion. The enzyme catalyses (2R)-2,3-dihydroxy-3-methylbutanoate = 3-methyl-2-oxobutanoate + H2O. The catalysed reaction is (2R,3R)-2,3-dihydroxy-3-methylpentanoate = (S)-3-methyl-2-oxopentanoate + H2O. Its pathway is amino-acid biosynthesis; L-isoleucine biosynthesis; L-isoleucine from 2-oxobutanoate: step 3/4. It participates in amino-acid biosynthesis; L-valine biosynthesis; L-valine from pyruvate: step 3/4. DHAD activity is not inhibited by the dihydroxyacid dehydratase inhibitor aspterric acid (AA). Dihydroxyacid dehydratase; part of the gene cluster that mediates the biosynthesis of the sesquiterpenoid aspterric acid (AA), an inhibitor of dihydroxy-acid dehydratase (DHAD) effective as an herbicide. Performs the third step in the common pathway leading to biosynthesis of branched-chain amino acids. Catalyzes the dehydration of (2R,3R)-2,3-dihydroxy-3-methylpentanoate (2,3-dihydroxy-3-methylvalerate) into 2-oxo-3-methylpentanoate (2-oxo-3-methylvalerate) and of (2R)-2,3-dihydroxy-3-methylbutanoate (2,3-dihydroxyisovalerate) into 2-oxo-3-methylbutanoate (2-oxoisovalerate), the penultimate precursor to L-isoleucine and L-valine, respectively. AstD confers self-resistance in the presence of the dihydroxyacid dehydratase inhibitor aspterric acid (AA) produced by the ast cluster. This chain is Dihydroxy-acid dehydratase astD, mitochondrial, found in Aspergillus terreus (strain NIH 2624 / FGSC A1156).